We begin with the raw amino-acid sequence, 226 residues long: UPF0758 protein SGO_1229 (226 aa).

Positions 103–225 (RILSSQKLAK…YYSYREETDL (123 aa)) constitute an MPN domain. Zn(2+)-binding residues include histidine 174, histidine 176, and aspartate 187. Residues 174 to 187 (HNHPSGATRPSRDD) carry the JAMM motif motif.

It belongs to the UPF0758 family.

The sequence is that of UPF0758 protein SGO_1229 from Streptococcus gordonii (strain Challis / ATCC 35105 / BCRC 15272 / CH1 / DL1 / V288).